Reading from the N-terminus, the 399-residue chain is Phosphoglycerate kinase (399 aa).

Substrate is bound by residues Asp21–Asn23, Arg37, His60–Arg63, Arg119, and Arg152. Residues Lys205, Gly296, Glu327, and Gly353–Thr356 contribute to the ATP site.

The protein belongs to the phosphoglycerate kinase family. In terms of assembly, monomer.

The protein localises to the cytoplasm. The enzyme catalyses (2R)-3-phosphoglycerate + ATP = (2R)-3-phospho-glyceroyl phosphate + ADP. Its pathway is carbohydrate degradation; glycolysis; pyruvate from D-glyceraldehyde 3-phosphate: step 2/5. The chain is Phosphoglycerate kinase from Sulfurimonas denitrificans (strain ATCC 33889 / DSM 1251) (Thiomicrospira denitrificans (strain ATCC 33889 / DSM 1251)).